We begin with the raw amino-acid sequence, 312 residues long: Elongation factor Ts (312 aa).

The interval 84 to 87 (TDFL) is involved in Mg(2+) ion dislocation from EF-Tu.

It belongs to the EF-Ts family.

Its subcellular location is the cytoplasm. Associates with the EF-Tu.GDP complex and induces the exchange of GDP to GTP. It remains bound to the aminoacyl-tRNA.EF-Tu.GTP complex up to the GTP hydrolysis stage on the ribosome. This is Elongation factor Ts from Caulobacter sp. (strain K31).